The primary structure comprises 275 residues: Notch homolog 2 N-terminal-like protein B (275 aa).

An N-terminal signal peptide occupies residues 1–25 (MPALRPALLWALLALWLCCATPAHA). 4 consecutive EGF-like domains span residues 26-63 (LQCR…EYCQ), 64-102 (HRDP…EDCQ), 105-143 (TSHP…KECQ), and 144-180 (WTDA…QKCE). Disulfide bonds link Cys28-Cys41, Cys35-Cys51, Cys53-Cys62, Cys68-Cys79, Cys73-Cys90, Cys92-Cys101, Cys109-Cys121, Cys115-Cys131, Cys133-Cys142, Cys148-Cys159, Cys153-Cys168, Cys170-Cys179, Cys186-Cys198, Cys192-Cys207, Cys209-Cys218, Cys225-Cys236, and Cys230-Cys246. Asn46 is a glycosylation site (N-linked (GlcNAc...) asparagine). A glycan (N-linked (GlcNAc...) asparagine) is linked at Asn155. An EGF-like 5; calcium-binding domain is found at 182–219 (DVNECDIPGHCQHGGICLNLPGSYQCQCLQGFTGQYCD). In terms of domain architecture, EGF-like 6 spans 221-258 (LYVPCAPSPCVNGGTCRQTGDFTFECNCLPETVRRGTE).

It belongs to the NOTCH family. As to quaternary structure, interacts with NOTCH2. Interacts with DLL1; the interaction is direct. In terms of tissue distribution, expressed in radial glia neural stem cells during cortical development.

Its subcellular location is the secreted. Human-specific protein that promotes neural progenitor proliferation and evolutionary expansion of the brain neocortex by regulating the Notch signaling pathway. Able to promote neural progenitor self-renewal, possibly by down-regulating neuronal differentiation genes, thereby delaying the differentiation of neuronal progenitors and leading to an overall final increase in neuronal production. Acts by enhancing the Notch signaling pathway via two different mechanisms that probably work in parallel to reach the same effect. Enhances Notch signaling pathway in a non-cell-autonomous manner via direct interaction with NOTCH2. Also promotes Notch signaling pathway in a cell-autonomous manner through inhibition of cis DLL1-NOTCH2 interactions, which promotes neuronal differentiation. This Homo sapiens (Human) protein is Notch homolog 2 N-terminal-like protein B.